The following is a 218-amino-acid chain: Small ribosomal subunit protein uS3 (218 aa).

One can recognise a KH type-2 domain in the interval 38 to 106 (IRDYVAKRLS…RVHINIVEIK (69 aa)).

Belongs to the universal ribosomal protein uS3 family. Part of the 30S ribosomal subunit. Forms a tight complex with proteins S10 and S14.

Binds the lower part of the 30S subunit head. Binds mRNA in the 70S ribosome, positioning it for translation. The protein is Small ribosomal subunit protein uS3 of Listeria monocytogenes serotype 4b (strain F2365).